A 399-amino-acid chain; its full sequence is 3-sulfinopropanoyl-CoA desulfinase (399 aa).

Residues 121-124 (ICIS), S130, and 153-156 (YWIT) contribute to the FAD site. 244–245 (YN) contacts substrate. FAD is bound by residues R273, Q340, S344, 367 to 371 (GGTAQ), and Q388.

The protein belongs to the acyl-CoA dehydrogenase family. As to quaternary structure, homotrimer or homotetramer. Requires FAD as cofactor.

The catalysed reaction is 3-sulfinopropanoyl-CoA + H2O = propanoyl-CoA + sulfite + H(+). Catalyzes the conversion 3-sulfinopropanoyl-CoA (3SP-CoA) to propanoyl-CoA by abstraction of sulfite. Does not show dehydrogenase activity. The sequence is that of 3-sulfinopropanoyl-CoA desulfinase from Variovorax paradoxus.